We begin with the raw amino-acid sequence, 544 residues long: Chaperonin GroEL 2 (544 aa).

Residues 29–32, 86–90, glycine 413, 479–481, and aspartate 495 each bind ATP; these read TLGP, DGTTT, and NAA.

It belongs to the chaperonin (HSP60) family. In terms of assembly, forms a cylinder of 14 subunits composed of two heptameric rings stacked back-to-back. Interacts with the co-chaperonin GroES.

Its subcellular location is the cytoplasm. The catalysed reaction is ATP + H2O + a folded polypeptide = ADP + phosphate + an unfolded polypeptide.. Its function is as follows. Together with its co-chaperonin GroES, plays an essential role in assisting protein folding. The GroEL-GroES system forms a nano-cage that allows encapsulation of the non-native substrate proteins and provides a physical environment optimized to promote and accelerate protein folding. The protein is Chaperonin GroEL 2 of Prochlorococcus marinus subsp. pastoris (strain CCMP1986 / NIES-2087 / MED4).